Consider the following 190-residue polypeptide: Potassium-transporting ATPase KdpC subunit (190 aa).

The helical transmembrane segment at Leu-15–Phe-35 threads the bilayer.

It belongs to the KdpC family. In terms of assembly, the system is composed of three essential subunits: KdpA, KdpB and KdpC.

It is found in the cell inner membrane. Its function is as follows. Part of the high-affinity ATP-driven potassium transport (or Kdp) system, which catalyzes the hydrolysis of ATP coupled with the electrogenic transport of potassium into the cytoplasm. This subunit acts as a catalytic chaperone that increases the ATP-binding affinity of the ATP-hydrolyzing subunit KdpB by the formation of a transient KdpB/KdpC/ATP ternary complex. This chain is Potassium-transporting ATPase KdpC subunit, found in Synechocystis sp. (strain ATCC 27184 / PCC 6803 / Kazusa).